A 258-amino-acid polypeptide reads, in one-letter code: Tryptophan synthase alpha chain (258 aa).

Catalysis depends on proton acceptor residues Glu-47 and Asp-58.

Belongs to the TrpA family. As to quaternary structure, tetramer of two alpha and two beta chains.

It carries out the reaction (1S,2R)-1-C-(indol-3-yl)glycerol 3-phosphate + L-serine = D-glyceraldehyde 3-phosphate + L-tryptophan + H2O. The protein operates within amino-acid biosynthesis; L-tryptophan biosynthesis; L-tryptophan from chorismate: step 5/5. The alpha subunit is responsible for the aldol cleavage of indoleglycerol phosphate to indole and glyceraldehyde 3-phosphate. The chain is Tryptophan synthase alpha chain from Bacillus thuringiensis (strain Al Hakam).